A 352-amino-acid chain; its full sequence is Vacuolar protein sorting-associated protein 37C (352 aa).

Residue S29 is modified to Phosphoserine. The VPS37 C-terminal domain maps to 78–167 (VERCQEQKAK…RRPRALPELA (90 aa)). The tract at residues 162–352 (ALPELAGDVP…HPPGPAWPRY (191 aa)) is disordered. Pro residues-rich tracts occupy residues 173–185 (KRPP…PQAT), 202–213 (YPLPYSPSPGLP), and 319–336 (PGQP…PPGT).

Belongs to the VPS37 family. As to quaternary structure, component of the ESCRT-I complex (endosomal sorting complex required for transport I) which consists of TSG101, VPS28, a VPS37 protein (VPS37A to -D) and MVB12A or MVB12B in a 1:1:1:1 stoichiometry. Interacts with TSG101, VPS28, MVB12A and MVB12B. Component of the ESCRT-I complex (endosomal sorting complex required for transport I) which consists of TSG101, VPS28, a VPS37 protein (VPS37A to -D) and UBAP1 in a 1:1:1:1 stoichiometry. Interacts with HGS and STAM2. Interacts with CEP55. In terms of processing, phosphorylated by TBK1.

It localises to the late endosome membrane. Functionally, component of the ESCRT-I complex, a regulator of vesicular trafficking process. Required for the sorting of endocytic ubiquitinated cargos into multivesicular bodies. May be involved in cell growth and differentiation. The chain is Vacuolar protein sorting-associated protein 37C (Vps37c) from Mus musculus (Mouse).